A 196-amino-acid polypeptide reads, in one-letter code: MAGSKKSNRREEILQALAHMLESAEGASRITTAKLAQQVGVSEAALYRHFPSKARMFEGLIEFIEEALMSRINRILDEEKDTLERIRLVLQLLLAFAERNPGLTRIMSGHALMFENERLRDRINQLFERIETQLRQILRERKLREGKSFPVEEKILAAQLLGQVEGSLNRFVRSDFKYQPTENFEEYWALLSAQIK.

Residues 7 to 68 enclose the HTH tetR-type domain; the sequence is SNRREEILQA…GLIEFIEEAL (62 aa). The segment at residues 31 to 50 is a DNA-binding region (H-T-H motif); sequence TTAKLAQQVGVSEAALYRHF. Positions 65–142 form a coiled coil; the sequence is EEALMSRINR…QLRQILRERK (78 aa).

Belongs to the nucleoid occlusion factor SlmA family. In terms of assembly, homodimer. Interacts with FtsZ.

It localises to the cytoplasm. The protein resides in the nucleoid. In terms of biological role, required for nucleoid occlusion (NO) phenomenon, which prevents Z-ring formation and cell division over the nucleoid. Acts as a DNA-associated cell division inhibitor that binds simultaneously chromosomal DNA and FtsZ, and disrupts the assembly of FtsZ polymers. SlmA-DNA-binding sequences (SBS) are dispersed on non-Ter regions of the chromosome, preventing FtsZ polymerization at these regions. This is Nucleoid occlusion factor SlmA from Vibrio vulnificus (strain CMCP6).